We begin with the raw amino-acid sequence, 614 residues long: Vitamin B12 transporter BtuB (614 aa).

Residues 1 to 20 (MIKKASLLTACSVTAFSAWA) form the signal peptide. The short motif at 26 to 33 (DTLVVTAN) is the TonB box element. In terms of domain architecture, TBDR plug spans 38–152 (PRSTVLAPTT…IGGVVNIITT (115 aa)). Residues leucine 83, serine 85, asparagine 92, and 110 to 111 (VS) each bind cyanocob(III)alamin. Residues 155 to 614 (EPGTEISAGW…EYTLSGSYTF (460 aa)) enclose the TBDR beta-barrel domain. The next 3 beta stranded transmembrane spans lie at 158–165 (TEISAGWG), 169–178 (YQNYDVSTQQ), and 184–195 (TRVTLLGDYAHT). Ca(2+)-binding residues include aspartate 199, glutamine 211, aspartate 213, and aspartate 215. 2 beta stranded membrane-spanning segments follow: residues 217–227 (FLSKTLYGALE) and 232–248 (DAWSGFVRGYGYDNRTN). Tyrosine 249 and aspartate 250 together coordinate Ca(2+). Residue alanine 251 participates in cyanocob(III)alamin binding. Aspartate 261 is a Ca(2+) binding site. A run of 14 beta stranded transmembrane segments spans residues 263–277 (RKLYSQSWDAGLRYN), 279–296 (ELIKSQLITSYSHSKDYN), 309–325 (TLDEMKQYTVQWANNVI), 328–337 (HGSIGAGVDW), 353–369 (YDQRNTGIYLTGLQQVG), 371–381 (FTFEGAARSDD), 385–400 (FGRHGTWQTSAGWEFI), 403–417 (YRFIASYGTSYKAPN), 434–443 (KSKQWEGAFE), 449–458 (VNWRISGYRN), 473–490 (YYNEGKARIKGVEATANF), 494–509 (PLTHTVSYDYVDARNA), 517–529 (RRAKQQVKYQLDW), and 535–550 (DWGITYQYLGTRYDKD). Cyanocob(III)alamin is bound at residue threonine 309. Cyanocob(III)alamin is bound at residue arginine 517. Tyrosine 551 serves as a coordination point for cyanocob(III)alamin. Beta stranded transmembrane passes span 558–572 (TVKMGGVSLWDLAVA), 585–596 (IANLFDKDYETV), and 602–614 (AGREYTLSGSYTF). Positions 597-614 (YGYQTAGREYTLSGSYTF) match the TonB C-terminal box motif.

The protein belongs to the TonB-dependent receptor family. BtuB (TC 1.B.14.3.1) subfamily.

Its subcellular location is the cell outer membrane. Functionally, involved in the active translocation of vitamin B12 (cyanocobalamin) across the outer membrane to the periplasmic space. It derives its energy for transport by interacting with the trans-periplasmic membrane protein TonB. The sequence is that of Vitamin B12 transporter BtuB from Escherichia coli O9:H4 (strain HS).